A 162-amino-acid chain; its full sequence is Ubiquitin-fold modifier-conjugating enzyme 1 (162 aa).

C115 (glycyl thioester intermediate) is an active-site residue.

Belongs to the ubiquitin-conjugating enzyme family. UFC1 subfamily. In terms of assembly, interacts with uba-5.

In terms of biological role, E2-like enzyme which forms an intermediate with ufm-1. The intermediate is formed via a thioester linkage. The sequence is that of Ubiquitin-fold modifier-conjugating enzyme 1 from Caenorhabditis briggsae.